The sequence spans 252 residues: MRILLTNDDGIHAPGFEVLEDIARELSDEIWVCAPAEEQSGAGHSLTLHHPVRLRQLGERRYSVTGTPTDSVMLALRTVLEDKQPDLILSGVNRGANLGDDITYSGTASAAMEGALGGIKSIALSQVYKRDAEHELFDAARTYGADVIRKLIDAPFGDRTLININFPPLPADKVRGIRAVRQGFHDYSRGSVVKGRDPRGLEYYWFGLYAIEHTLDHGTDLEAIDEGFVSVTPLQLDLTQHSLLSVIGERFE.

A divalent metal cation contacts are provided by Asp-8, Asp-9, Ser-40, and Asn-93.

The protein belongs to the SurE nucleotidase family. It depends on a divalent metal cation as a cofactor.

The protein resides in the cytoplasm. The catalysed reaction is a ribonucleoside 5'-phosphate + H2O = a ribonucleoside + phosphate. In terms of biological role, nucleotidase that shows phosphatase activity on nucleoside 5'-monophosphates. The protein is 5'-nucleotidase SurE of Erythrobacter litoralis (strain HTCC2594).